The sequence spans 208 residues: Small ribosomal subunit protein uS4 (208 aa).

Residues 98-158 enclose the S4 RNA-binding domain; that stretch reads RRLDNIVYRL…EKSRKVASIN (61 aa).

Belongs to the universal ribosomal protein uS4 family. As to quaternary structure, part of the 30S ribosomal subunit. Contacts protein S5. The interaction surface between S4 and S5 is involved in control of translational fidelity.

One of the primary rRNA binding proteins, it binds directly to 16S rRNA where it nucleates assembly of the body of the 30S subunit. Its function is as follows. With S5 and S12 plays an important role in translational accuracy. The chain is Small ribosomal subunit protein uS4 from Geotalea daltonii (strain DSM 22248 / JCM 15807 / FRC-32) (Geobacter daltonii).